A 222-amino-acid chain; its full sequence is Ribonuclease 3 (222 aa).

One can recognise an RNase III domain in the interval 3-125 (SQSVAKKLNH…LFGAIYLDAG (123 aa)). Glu38 provides a ligand contact to Mg(2+). Asp42 is an active-site residue. Residues Asp111 and Glu114 each coordinate Mg(2+). Residue Glu114 is part of the active site. The region spanning 152-222 (DAKTRLQEWL…AEKALKELLA (71 aa)) is the DRBM domain.

This sequence belongs to the ribonuclease III family. Homodimer. Mg(2+) is required as a cofactor.

The protein resides in the cytoplasm. The catalysed reaction is Endonucleolytic cleavage to 5'-phosphomonoester.. In terms of biological role, digests double-stranded RNA. Involved in the processing of primary rRNA transcript to yield the immediate precursors to the large and small rRNAs (23S and 16S). Processes some mRNAs, and tRNAs when they are encoded in the rRNA operon. Processes pre-crRNA and tracrRNA of type II CRISPR loci if present in the organism. The protein is Ribonuclease 3 of Dechloromonas aromatica (strain RCB).